The following is a 1321-amino-acid chain: MLRNGSLRQSLRTLDSFSLAPEDVLKTAIKTVEDYEGDNIDSNGEIKITRDAKEEVVNKVSIPQLYRYTTTLEKLLLFIGTLVAVITGAGLPLMSILQGKVSQAFINEQIVINNNGSTFLPTGQNYTKTDFEHDVMNVVWSYAAMTVGMWAAGQITVTCYLYVAEQMNNRLRREFVKSILRQEISWFDTNHSGTLATKLFDNLERVKEGTGDKIGMAFQYLSQFITGFIVAFTHSWQLTLVMLAVTPIQALCGFAIAKSMSTFAIRETLRYAKAGKVVEETISSIRTVVSLNGLRYELERYSTAVEEAKKAGVLKGLFLGISFGAMQASNFISFALAFYIGVGWVHDGSLNFGDMLTTFSSVMMGSMALGLAGPQLAVLGTAQGAASGIYEVLDRKPVIDSSSKAGRKDMKIKGDITVENVHFTYPSRPDVPILRGMNLRVNAGQTVALVGSSGCGKSTIISLLLRYYDVLKGKITIDGVDVRDINLEFLRKNVAVVSQEPALFNCTIEENISLGKEGITREEMVAACKMANAEKFIKTLPNGYNTLVGDRGTQLSGGQKQRIAIARALVRNPKILLLDEATSALDAESEGIVQQALDKAAKGRTTIIIAHRLSTIRNADLIISCKNGQVVEVGDHRALMAQQGLYYDLVTAQTFTDAVDSAAEGKFSRENSVARQTSEHEGLSRQASEMDDIMNRVRSSTIGSITNGPVIDEKEERIGKDALSRLKQELEENNAQKTNLFEILYHARPHALSLFIGMSTATIGGFIYPTYSVFFTSFMNVFAGNPADFLSQGHFWALMFLVLAAAQGICSFLMTFFMGIASESLTRDLRNKLFRNVLSQHIGFFDSPQNASGKISTRLATDVPNLRTAIDFRFSTVITTLVSMVAGIGLAFFYGWQMALLIIAILPIVAFGQYLRGRRFTGKNVKSASEFADSGKIAIEAIENVRTVQALAREDTFYENFCEKLDIPHKEAIKEAFIQGLSYGCASSVLYLLNTCAYRMGLALIITDPPTMQPMRVLRVMYAITISTSTLGFATSYFPEYAKATFAGGIIFGMLRKISKIDSLSLAGEKKKLYGKVIFKNVRFAYPERPEIEILKGLSFSVEPGQTLALVGPSGCGKSTVVALLERFYDTLGGEIFIDGSEIKTLNPEHTRSQIAIVSQEPTLFDCSIAENIIYGLDPSSVTMAQVEEAARLANIHNFIAELPEGFETRVGDRGTQLSGGQKQRIAIARALVRNPKILLLDEATSALDTESEKVVQEALDRAREGRTCIVIAHRLNTVMNADCIAVVSNGTIIEKGTHTQLMSEKGAYYKLTQKQMTEKK.

The Cytoplasmic portion of the chain corresponds to 1 to 77 (MLRNGSLRQS…YTTTLEKLLL (77 aa)). The region spanning 77 to 381 (LFIGTLVAVI…AGPQLAVLGT (305 aa)) is the ABC transmembrane type-1 1 domain. A helical membrane pass occupies residues 78–98 (FIGTLVAVITGAGLPLMSILQ). 2 N-linked (GlcNAc...) asparagine glycosylation sites follow: Asn115 and Asn125. A helical transmembrane segment spans residues 144-164 (AMTVGMWAAGQITVTCYLYVA). Asn190 is a glycosylation site (N-linked (GlcNAc...) asparagine). Helical transmembrane passes span 213–233 (KIGM…VAFT), 240–260 (LVML…AKSM), 321–341 (ISFG…FYIG), and 350–370 (LNFG…MALG). Residues 371–753 (LAGPQLAVLG…LYHARPHALS (383 aa)) are Cytoplasmic-facing. One can recognise an ABC transporter 1 domain in the interval 416–652 (ITVENVHFTY…QGLYYDLVTA (237 aa)). 451–458 (GSSGCGKS) contacts ATP. The next 2 membrane-spanning stretches (helical) occupy residues 754–774 (LFIG…YSVF) and 798–818 (LMFL…TFFM). Residues 754 to 1043 (LFIGMSTATI…ATSYFPEYAK (290 aa)) form the ABC transmembrane type-1 2 domain. The N-linked (GlcNAc...) asparagine glycan is linked to Asn850. Helical transmembrane passes span 874-894 (FSTV…AFFY), 895-915 (GWQM…GQYL), 978-998 (IQGL…TCAY), and 1017-1037 (VLRV…ATSY). Residues 1038 to 1321 (FPEYAKATFA…LTQKQMTEKK (284 aa)) lie on the Cytoplasmic side of the membrane. Residues 1077–1315 (VIFKNVRFAY…KGAYYKLTQK (239 aa)) form the ABC transporter 2 domain. An ATP-binding site is contributed by 1112-1119 (GPSGCGKS).

This sequence belongs to the ABC transporter superfamily. ABCB family. Multidrug resistance exporter (TC 3.A.1.201) subfamily. In terms of tissue distribution, intestinal cells.

The protein localises to the membrane. It catalyses the reaction ATP + H2O + xenobioticSide 1 = ADP + phosphate + xenobioticSide 2.. Its function is as follows. Energy-dependent efflux pump responsible for decreased drug accumulation in multidrug-resistant cells. The chain is Multidrug resistance protein pgp-1 (pgp-1) from Caenorhabditis elegans.